The following is a 569-amino-acid chain: Proline--tRNA ligase (569 aa).

It belongs to the class-II aminoacyl-tRNA synthetase family. ProS type 1 subfamily. Homodimer.

The protein localises to the cytoplasm. It catalyses the reaction tRNA(Pro) + L-proline + ATP = L-prolyl-tRNA(Pro) + AMP + diphosphate. Its function is as follows. Catalyzes the attachment of proline to tRNA(Pro) in a two-step reaction: proline is first activated by ATP to form Pro-AMP and then transferred to the acceptor end of tRNA(Pro). As ProRS can inadvertently accommodate and process non-cognate amino acids such as alanine and cysteine, to avoid such errors it has two additional distinct editing activities against alanine. One activity is designated as 'pretransfer' editing and involves the tRNA(Pro)-independent hydrolysis of activated Ala-AMP. The other activity is designated 'posttransfer' editing and involves deacylation of mischarged Ala-tRNA(Pro). The misacylated Cys-tRNA(Pro) is not edited by ProRS. The protein is Proline--tRNA ligase of Legionella pneumophila (strain Corby).